The following is a 189-amino-acid chain: Chitin synthase 3 (189 aa).

The protein belongs to the chitin synthase family. Class II subfamily.

The protein localises to the cell membrane. It carries out the reaction [(1-&gt;4)-N-acetyl-beta-D-glucosaminyl](n) + UDP-N-acetyl-alpha-D-glucosamine = [(1-&gt;4)-N-acetyl-beta-D-glucosaminyl](n+1) + UDP + H(+). Polymerizes chitin, a structural polymer of the cell wall and septum, by transferring the sugar moiety of UDP-GlcNAc to the non-reducing end of the growing chitin polymer. This is Chitin synthase 3 (CHS3) from Ajellomyces capsulatus (Darling's disease fungus).